A 142-amino-acid polypeptide reads, in one-letter code: Transcriptional regulator MraZ (142 aa).

2 consecutive SpoVT-AbrB domains span residues 5–51 and 77–120; these read ASAL…PRPE and AADV…DAAT.

This sequence belongs to the MraZ family. In terms of assembly, forms oligomers.

The protein localises to the cytoplasm. It localises to the nucleoid. The sequence is that of Transcriptional regulator MraZ from Ralstonia nicotianae (strain ATCC BAA-1114 / GMI1000) (Ralstonia solanacearum).